Reading from the N-terminus, the 158-residue chain is Small ribosomal subunit protein uS13 (158 aa).

Belongs to the universal ribosomal protein uS13 family. In terms of assembly, part of the 30S ribosomal subunit. Forms a loose heterodimer with protein S19. Forms two bridges to the 50S subunit in the 70S ribosome.

Its function is as follows. Located at the top of the head of the 30S subunit, it contacts several helices of the 16S rRNA. In the 70S ribosome it contacts the 23S rRNA (bridge B1a) and protein L5 of the 50S subunit (bridge B1b), connecting the 2 subunits; these bridges are implicated in subunit movement. The protein is Small ribosomal subunit protein uS13 of Picrophilus torridus (strain ATCC 700027 / DSM 9790 / JCM 10055 / NBRC 100828 / KAW 2/3).